Consider the following 82-residue polypeptide: MSSPTPPGGQRTLQKRKQGSSQKVAASAPKKNTNSNNSILKIYSDEATGLRVDPLVVLFLAVGFIFSVVALHVISKVAGKLF.

The disordered stretch occupies residues Met1–Asn36. Residues Met1–Asp53 lie on the Cytoplasmic side of the membrane. A compositionally biased stretch (polar residues) spans Gly19 to Asn36. A helical membrane pass occupies residues Pro54–Ile74.

The protein belongs to the SEC61-beta family. In terms of assembly, component of the heterotrimeric Sec61 complex, which is composed of SSH1, SBH1 and SSS1. Presumably three to four Sec61 heterotrimers assemble into an oligomeric ring with a central aqueous pore. In cotranslational ER import, the pore diameter varies from 9-15 A in a ribosome-free resting state to 40-60 A in a functional state when associated with the ribosome. The Sec61 complex is part of a channel-forming translocon complex whose composition seem to change dependent upon different functional states. During post-translational ER import the Sec61 complex associates with the Sec62/63 complex to form the Sec complex. SBH1 interacts OST2, OST4 and WBP1 components of the OT complex.

The protein localises to the endoplasmic reticulum membrane. Part of the Sec61 complex, which is the major component of a channel-forming translocon complex that mediates protein translocation across the endoplasmic reticulum (ER). The functional states of the translocon complex include co- and post-translational ER import, cotranslational membrane protein integration and retrograde transport of misfolded proteins out of the ER. In the cotranslational pathway, ribosomes synthesizing presecretory proteins are targeted to the translocon by the cytosolic signal recognition particle (SRP) and its ER-localized receptor. The association of the Sec61 complex with the ribosome is mediated by the 28S rRNA of the large ribosomal subunit. SRP-independent post-translational translocation requires the association of additional factors, such as the Sec62/63 complex and KAR2. The protein is Protein transport protein SBH1 (SBH1) of Saccharomyces cerevisiae (strain ATCC 204508 / S288c) (Baker's yeast).